The chain runs to 917 residues: Hexokinase-2 (917 aa).

Residue methionine 1 is modified to N-acetylmethionine. Residues 1-16 (MIASHLLAYFFTELNH) form a mitochondrial-binding peptide (MBP) region. 2 Hexokinase domains span residues 16-458 (HDQV…MVTA) and 464-906 (ADQH…LITA). ATP-binding positions include arginine 30 and 84 to 89 (DLGGTN). A hexokinase small subdomain 1 region spans residues 73-207 (DGTEHGEFLA…DFDIDIVAVV (135 aa)). 84–88 (DLGGT) contributes to the D-glucose 6-phosphate binding site. D-glucose is bound by residues 155-156 (SF), 172-173 (TK), and 208-209 (ND). The hexokinase large subdomain 1 stretch occupies residues 208–447 (NDTVGTMMTC…CDVRFLRSED (240 aa)). D-glucose 6-phosphate is bound by residues aspartate 209 and threonine 232. D-glucose-binding positions include asparagine 235, glutamate 260, and 291–294 (QLFE). A D-glucose 6-phosphate-binding site is contributed by 413–415 (DGS). 425–426 (KR) lines the ATP pocket. D-glucose 6-phosphate is bound by residues serine 449 and 532–536 (DLGGT). The segment at 521 to 655 (DGTEKGDFLA…EFDLDVVAVV (135 aa)) is hexokinase small subdomain 2. Position 532–537 (532–537 (DLGGTN)) interacts with ATP. D-glucose-binding positions include 603 to 604 (SF), 620 to 621 (TK), and 656 to 657 (ND). The interval 656 to 895 (NDTVGTMMTC…CDVSFLQSED (240 aa)) is hexokinase large subdomain 2. The D-glucose 6-phosphate site is built by aspartate 657 and threonine 680. Threonine 680 lines the ATP pocket. D-glucose-binding positions include 682 to 683 (SN), glutamate 708, and 739 to 742 (QRFE). ATP-binding positions include 747 to 748 (GM), 784 to 788 (TKFLS), and 863 to 867 (TLYKL). Residues 861-863 (DGT) and serine 897 each bind D-glucose 6-phosphate.

This sequence belongs to the hexokinase family. Monomer. Interacts with TIGAR; the interaction increases hexokinase activity in a hypoxia- and HIF1A-dependent manner. Predominant hexokinase isozyme expressed in insulin-responsive tissues such as skeletal muscle.

Its subcellular location is the mitochondrion outer membrane. The protein localises to the cytoplasm. It is found in the cytosol. The enzyme catalyses a D-hexose + ATP = a D-hexose 6-phosphate + ADP + H(+). It carries out the reaction D-fructose + ATP = D-fructose 6-phosphate + ADP + H(+). The catalysed reaction is D-glucose + ATP = D-glucose 6-phosphate + ADP + H(+). It functions in the pathway carbohydrate metabolism; hexose metabolism. It participates in carbohydrate degradation; glycolysis; D-glyceraldehyde 3-phosphate and glycerone phosphate from D-glucose: step 1/4. With respect to regulation, hexokinase activity is specifically inhibited by 2,6-disubstituted glucosamines. Its function is as follows. Catalyzes the phosphorylation of hexose, such as D-glucose and D-fructose, to hexose 6-phosphate (D-glucose 6-phosphate and D-fructose 6-phosphate, respectively). Mediates the initial step of glycolysis by catalyzing phosphorylation of D-glucose to D-glucose 6-phosphate. Plays a key role in maintaining the integrity of the outer mitochondrial membrane by preventing the release of apoptogenic molecules from the intermembrane space and subsequent apoptosis. This chain is Hexokinase-2, found in Homo sapiens (Human).